The sequence spans 563 residues: Protein NRT1/ PTR FAMILY 5.9 (563 aa).

A helical transmembrane segment spans residues 56–76 (TWAGFTSMLPLFSAPLADTYW). Thr81 is subject to Phosphothreonine. The next 10 membrane-spanning stretches (helical) occupy residues 82–102 (ILAS…TAFA), 110–130 (TISS…LGVL), 168–188 (FFQL…TVMA), 194–214 (FGWV…ILVF), 317–337 (FPIW…ATFF), 362–382 (TITL…IPIT), 394–414 (VMER…IAAI), 441–461 (IFWL…TVVG), 479–499 (FALY…LISI), and 528–548 (WLLA…CKFF).

It belongs to the major facilitator superfamily. Proton-dependent oligopeptide transporter (POT/PTR) (TC 2.A.17) family. In terms of tissue distribution, expressed in roots and flowers.

It localises to the membrane. This chain is Protein NRT1/ PTR FAMILY 5.9 (NPF5.9), found in Arabidopsis thaliana (Mouse-ear cress).